The primary structure comprises 406 residues: 4-hydroxy-3-methylbut-2-en-1-yl diphosphate synthase (ferredoxin) (406 aa).

Positions 315, 318, 349, and 356 each coordinate [4Fe-4S] cluster.

Belongs to the IspG family. It depends on [4Fe-4S] cluster as a cofactor.

It carries out the reaction (2E)-4-hydroxy-3-methylbut-2-enyl diphosphate + 2 oxidized [2Fe-2S]-[ferredoxin] + H2O = 2-C-methyl-D-erythritol 2,4-cyclic diphosphate + 2 reduced [2Fe-2S]-[ferredoxin] + H(+). It participates in isoprenoid biosynthesis; isopentenyl diphosphate biosynthesis via DXP pathway; isopentenyl diphosphate from 1-deoxy-D-xylulose 5-phosphate: step 5/6. In terms of biological role, converts 2C-methyl-D-erythritol 2,4-cyclodiphosphate (ME-2,4cPP) into 1-hydroxy-2-methyl-2-(E)-butenyl 4-diphosphate. This Trichodesmium erythraeum (strain IMS101) protein is 4-hydroxy-3-methylbut-2-en-1-yl diphosphate synthase (ferredoxin).